We begin with the raw amino-acid sequence, 301 residues long: Acetylglutamate kinase (301 aa).

Substrate-binding positions include 68–69 (GG), Arg-90, and Asn-195.

Belongs to the acetylglutamate kinase family. ArgB subfamily.

The protein resides in the cytoplasm. The enzyme catalyses N-acetyl-L-glutamate + ATP = N-acetyl-L-glutamyl 5-phosphate + ADP. It functions in the pathway amino-acid biosynthesis; L-arginine biosynthesis; N(2)-acetyl-L-ornithine from L-glutamate: step 2/4. Functionally, catalyzes the ATP-dependent phosphorylation of N-acetyl-L-glutamate. This Pseudomonas putida (strain ATCC 700007 / DSM 6899 / JCM 31910 / BCRC 17059 / LMG 24140 / F1) protein is Acetylglutamate kinase.